A 522-amino-acid chain; its full sequence is DNA damage-binding protein CMR1 (522 aa).

The tract at residues alanine 38–proline 100 is disordered. Residues threonine 54–alanine 63 show a composition bias toward polar residues. Serine 64 carries the post-translational modification Phosphoserine. Threonine 69 is modified (phosphothreonine). Residues leucine 75–lysine 84 show a composition bias toward basic and acidic residues. WD repeat units follow at residues isoleucine 183–serine 224, leucine 239–threonine 281, aspartate 287–asparagine 327, leucine 331–glutamate 371, aspartate 388–alanine 427, glycine 442–leucine 481, and proline 482–glutamate 521. Serine 224 carries the post-translational modification Phosphoserine.

Belongs to the WD repeat DDB2/WDR76 family.

The protein localises to the cytoplasm. The protein resides in the nucleus. DNA-binding protein that binds to both single- and double-stranded DNA. Binds preferentially to UV-damaged DNA in vitro. May be involved in DNA-metabolic processes. In Saccharomyces cerevisiae (strain ATCC 204508 / S288c) (Baker's yeast), this protein is DNA damage-binding protein CMR1.